Consider the following 199-residue polypeptide: Recombination protein RecR (199 aa).

The C4-type zinc-finger motif lies at 58–73 (CKKCFNLTSEEECEIC). Residues 81 to 175 (KIICVVAETK…KVTRIAYGLP (95 aa)) enclose the Toprim domain.

Belongs to the RecR family.

In terms of biological role, may play a role in DNA repair. It seems to be involved in an RecBC-independent recombinational process of DNA repair. It may act with RecF and RecO. The chain is Recombination protein RecR from Prochlorococcus marinus subsp. pastoris (strain CCMP1986 / NIES-2087 / MED4).